We begin with the raw amino-acid sequence, 160 residues long: MAISHTQLLLLLLVSLFFSPALCGPKFQTCDTGKEYPLKVSSVEISPDPVKRSGNGEITITGVTNKEISDGVTVNLKLAVGMFPVSTKSYSLCDITACPVAPGPIVLTLPNIFTPREKRTAIGYTIIISITDKPLKESMMCILFVVKLTGHASMINQVTE.

The N-terminal stretch at 1 to 23 is a signal peptide; the sequence is MAISHTQLLLLLLVSLFFSPALC.

Interacts with SYT1. In terms of tissue distribution, expressed exclusively in roots, in epidermis and cortex cells of the root elongation zone, and lateral root cap cells at the root tip.

Its subcellular location is the cytoplasm. Its function is as follows. Involved in the regulation of gravitropic response and basipetal auxin transport in roots. Involved in salt stress tolerance. May facilitate membrane trafficking and asymmetric cell elongation via SYT1. Binds stigmasterol and dipalmitoyl phosphoethanolamine (DPPE) in vitro. This is MD-2-related lipid-recognition protein ROSY1 from Arabidopsis thaliana (Mouse-ear cress).